The primary structure comprises 94 residues: Cell division topological specificity factor (94 aa).

This sequence belongs to the MinE family.

Functionally, prevents the cell division inhibition by proteins MinC and MinD at internal division sites while permitting inhibition at polar sites. This ensures cell division at the proper site by restricting the formation of a division septum at the midpoint of the long axis of the cell. In Clostridioides difficile (strain 630) (Peptoclostridium difficile), this protein is Cell division topological specificity factor.